A 715-amino-acid chain; its full sequence is ATP-dependent DNA helicase Hel308 (715 aa).

Residues 1–29 (MKVEELRIDERIKEVLKKRGISELYPPQA) carry the Q motif motif. Residues Gln-28 and 46–53 (IPTASGKT) each bind ATP. Residues 33–197 (TSGILKGENA…WLNAKLIKSD (165 aa)) enclose the Helicase ATP-binding domain. The short motif at 145–148 (DEIH) is the DEAH box element. The 194-residue stretch at 229-422 (LVYDAIKRSK…ILRGQILALI (194 aa)) folds into the Helicase C-terminal domain.

The protein belongs to the helicase family. Hel308 subfamily. As to quaternary structure, monomer.

The enzyme catalyses Couples ATP hydrolysis with the unwinding of duplex DNA by translocating in the 3'-5' direction.. The catalysed reaction is ATP + H2O = ADP + phosphate + H(+). DNA-dependent ATPase and 3'-5' DNA helicase that may be involved in repair of stalled replication forks. This is ATP-dependent DNA helicase Hel308 from Pyrococcus horikoshii (strain ATCC 700860 / DSM 12428 / JCM 9974 / NBRC 100139 / OT-3).